The sequence spans 218 residues: Large ribosomal subunit protein uL3 (218 aa).

Residues 124–162 are disordered; it reads KRHGFSRGPMTHGSKNHREPGSTGAGTTPGRIYPGKRMA.

The protein belongs to the universal ribosomal protein uL3 family. In terms of assembly, part of the 50S ribosomal subunit. Forms a cluster with proteins L14 and L19.

Functionally, one of the primary rRNA binding proteins, it binds directly near the 3'-end of the 23S rRNA, where it nucleates assembly of the 50S subunit. The protein is Large ribosomal subunit protein uL3 of Synechococcus sp. (strain CC9605).